The following is a 299-amino-acid chain: Mitochondrial 2-oxodicarboxylate carrier (299 aa).

Solcar repeat units lie at residues 11-100 (REAS…YKKL), 107-196 (SPAL…VKNM), and 205-294 (LEFL…TYSW). 6 helical membrane passes run 17–37 (IVAG…LDVV), 70–89 (FGFY…KRAV), 113–133 (TIAG…FEVV), 167–187 (GLNK…MVYF), 205–225 (LEFL…SVIN), and 277–297 (LGPG…WLQE).

The protein belongs to the mitochondrial carrier (TC 2.A.29) family.

Its subcellular location is the mitochondrion inner membrane. It catalyses the reaction 2-oxoadipate(in) + 2-oxoglutarate(out) = 2-oxoadipate(out) + 2-oxoglutarate(in). The catalysed reaction is hexanedioate(in) + 2-oxoglutarate(out) = hexanedioate(out) + 2-oxoglutarate(in). The enzyme catalyses L-2-aminoadipate(in) + 2-oxoglutarate(out) = L-2-aminoadipate(out) + 2-oxoglutarate(in). It carries out the reaction glutarate(in) + 2-oxoglutarate(out) = glutarate(out) + 2-oxoglutarate(in). It catalyses the reaction 2-oxoheptanedioate(in) + 2-oxoglutarate(out) = 2-oxoheptanedioate(out) + 2-oxoglutarate(in). The catalysed reaction is heptanedioate(in) + 2-oxoglutarate(out) = heptanedioate(out) + 2-oxoglutarate(in). The enzyme catalyses citrate(in) + 2-oxoglutarate(out) = citrate(out) + 2-oxoglutarate(in). Transports dicarboxylates across the inner membranes of mitochondria by a counter-exchange mechanism. Can transport 2-oxoadipate (2-oxohexanedioate), 2-oxoglutarate, adipate (hexanedioate), glutarate, and to a lesser extent, pimelate (heptanedioate), 2-oxopimelate (2-oxoheptanedioate), 2-aminoadipate (2-aminohexanedioate), oxaloacetate, and citrate. Plays a central role in catabolism of lysine, hydroxylysine, and tryptophan, by transporting common metabolite intermediates (such as 2-oxoadipate) into the mitochondria, where it is converted into acetyl-CoA and can enter the citric acid (TCA) cycle. This is Mitochondrial 2-oxodicarboxylate carrier (SLC25A21) from Pongo abelii (Sumatran orangutan).